The following is a 130-amino-acid chain: Small ribosomal subunit protein uS9 (130 aa).

It belongs to the universal ribosomal protein uS9 family.

This chain is Small ribosomal subunit protein uS9, found in Pseudoalteromonas atlantica (strain T6c / ATCC BAA-1087).